We begin with the raw amino-acid sequence, 396 residues long: Elongation factor Tu (396 aa).

The region spanning 11-205 (KPHVNIGTIG…IVDEYIPTPE (195 aa)) is the tr-type G domain. The interval 20–27 (GHVDHGKT) is G1. A GTP-binding site is contributed by 20-27 (GHVDHGKT). Residue Thr27 participates in Mg(2+) binding. Positions 61–65 (GITIN) are G2. Residues 82–85 (DAPG) form a G3 region. Residues 82–86 (DAPGH) and 137–140 (NKCD) each bind GTP. The segment at 137 to 140 (NKCD) is G4. Residues 175–177 (SAL) form a G5 region.

It belongs to the TRAFAC class translation factor GTPase superfamily. Classic translation factor GTPase family. EF-Tu/EF-1A subfamily. As to quaternary structure, monomer.

The protein localises to the cytoplasm. The enzyme catalyses GTP + H2O = GDP + phosphate + H(+). Functionally, GTP hydrolase that promotes the GTP-dependent binding of aminoacyl-tRNA to the A-site of ribosomes during protein biosynthesis. In Lactobacillus acidophilus (strain ATCC 700396 / NCK56 / N2 / NCFM), this protein is Elongation factor Tu.